An 810-amino-acid chain; its full sequence is MDGFRVAGALVVGALTAAYLYFGGRFSIALVIIVGYGIYCNEASGGSQDSQEKLDLNKQQKKPCCSDKKIADGGKKTGGCCSDKKNGGGKGGGCCSSKGGKKGGCCSSKGGKKGGCCSSKKNIGDNENTATEVEKAVNYPVTVDFTEVFRKPTKKRSSTPKVFSKNSSSNSRVGKKLSVSKKIGPDGLIKSALTISNETLLSSQIYVLYSSLQGAASKAAKSVYDKLKELDELTNEPKLLNLDDLSDFDDYFINVPVENALYVLVLPSYDIDCPLDYFLQTLEENANDFRVDSFPLRKLVGYTVLGLGDSESWPEKFCYQAKRADHWISRLGGRRIFPLGKVCMKTGGSAKIDEWTSLLAETLKDDEPIIYEYDENADSEEDEEEGNGSDELGDVEDIGGKGSNGKFSGADEIKQMVAKDSPTYKNLTKQGYKVIGSHSGVKICRWTKNELRGKGSCYKKSLFNIASSRCMELTPSLACSSKCVFCWRHGTNPVSKNWRWEVDEPEYILENALKGHYSMIKQMRGVPGVIAERFAKAFEVRHCALSLVGEPILYPHINKFIQLLHQKGITSFLVCNAQHPEALRNIVKVTQLYVSIDAPTKTELKKVDRPLYKDFWERMVECLEILKTVQNHQRTVFRLTLVKGFNMGDVSAYADLVQRGLPGFIEVKGATFSGSSDGNGNPLTMQNIPFYEECVKFVKAFTTELQRRGLHYDLAAEHAHSNCLLIADTKFKINGEWHTHIDFDKFFVLLNSGKDFTYMDYLEKTPEWALFGNGGFAPGNTRVYRKDKKKQNKENQETTTRETPLPPIPA.

2 disordered regions span residues 86–116 and 156–176; these read NGGGKGGGCCSSKGGKKGGCCSSKGGKKGGC and RSSTPKVFSKNSSSNSRVGKK. Residues 104-116 are compositionally biased toward low complexity; that stretch reads GCCSSKGGKKGGC. A compositionally biased stretch (polar residues) spans 159–172; that stretch reads TPKVFSKNSSSNSR. The Flavodoxin-like domain occupies 205–360; it reads IYVLYSSLQG…KIDEWTSLLA (156 aa). FMN contacts are provided by residues 211–215 and 304–337; these read SLQGA and VLGLGDSESWPEKFCYQAKRADHWISRLGGRRIF. A compositionally biased stretch (acidic residues) spans 374-397; it reads DENADSEEDEEEGNGSDELGDVED. Positions 374–407 are disordered; it reads DENADSEEDEEEGNGSDELGDVEDIGGKGSNGKF. A Radical SAM core domain is found at 463 to 713; sequence FNIASSRCME…ELQRRGLHYD (251 aa). The [4Fe-4S] cluster site is built by C479, C483, and C486. K496 participates in a covalent cross-link: Glycyl lysine isopeptide (Lys-Gly) (interchain with G-Cter in ubiquitin). Residues 782–810 are disordered; the sequence is RVYRKDKKKQNKENQETTTRETPLPPIPA.

It belongs to the TYW1 family. It depends on [4Fe-4S] cluster as a cofactor.

It is found in the endoplasmic reticulum. The catalysed reaction is N(1)-methylguanosine(37) in tRNA(Phe) + pyruvate + S-adenosyl-L-methionine = 4-demethylwyosine(37) in tRNA(Phe) + 5'-deoxyadenosine + L-methionine + CO2 + H2O. The protein operates within tRNA modification; wybutosine-tRNA(Phe) biosynthesis. Component of the wybutosine biosynthesis pathway. Wybutosine is a hyper modified guanosine with a tricyclic base found at the 3'-position adjacent to the anticodon of eukaryotic phenylalanine tRNA. Catalyzes the condensation of N-methylguanine with 2 carbon atoms from pyruvate to form the tricyclic 4-demethylwyosine, an intermediate in wybutosine biosynthesis. This is S-adenosyl-L-methionine-dependent tRNA 4-demethylwyosine synthase (TYW1) from Saccharomyces cerevisiae (strain ATCC 204508 / S288c) (Baker's yeast).